We begin with the raw amino-acid sequence, 130 residues long: Small ribosomal subunit protein uS9 (130 aa).

The protein belongs to the universal ribosomal protein uS9 family.

This Burkholderia mallei (strain NCTC 10247) protein is Small ribosomal subunit protein uS9.